Reading from the N-terminus, the 561-residue chain is Interleukin-1 receptor-like 2 (561 aa).

Residues methionine 1–alanine 21 form the signal peptide. Ig-like C2-type domains follow at residues glycine 22–threonine 113, serine 128–tyrosine 215, and serine 225–alanine 321. Residues glycine 22–arginine 338 lie on the Extracellular side of the membrane. N-linked (GlcNAc...) asparagine glycosylation is found at asparagine 23, asparagine 43, asparagine 55, asparagine 111, and asparagine 130. A disulfide bond links cysteine 44 and cysteine 97. A disulfide bridge links cysteine 149 with cysteine 199. N-linked (GlcNAc...) asparagine glycans are attached at residues asparagine 231, asparagine 237, asparagine 253, asparagine 269, asparagine 290, and asparagine 302. A disulfide bond links cysteine 252 and cysteine 319. The helical transmembrane segment at alanine 339–isoleucine 358 threads the bilayer. Topologically, residues tyrosine 359–glycine 561 are cytoplasmic. The region spanning lysine 384–methionine 539 is the TIR domain. Residue glutamate 470 is part of the active site.

Belongs to the interleukin-1 receptor family. As to quaternary structure, interacts with IL1RAP; the association is enhanced by IL36B indicative for an functional signaling complex and inhibited by IL36RN. In terms of tissue distribution, predominant expression in the lung and epididymis, with lower expression in cerebral cortex and testis. Expression in the brain is non-neuronal and associated with the cerebral vasculature. Not detected in any cell line tested.

It is found in the membrane. It carries out the reaction NAD(+) + H2O = ADP-D-ribose + nicotinamide + H(+). Its function is as follows. Receptor for interleukin-36 (IL36A, IL36B and IL36G). After binding to interleukin-36 associates with the coreceptor IL1RAP to form the interleukin-36 receptor complex which mediates interleukin-36-dependent activation of NF-kappa-B, MAPK and other pathways. The IL-36 signaling system is thought to be present in epithelial barriers and to take part in local inflammatory response; it is similar to the IL-1 system. Seems to be involved in skin inflammatory response by induction of the IL-23/IL-17/IL-22 pathway. Receptor for the interleukin IL36G. Binding to the agonist leads to the activation of NF-kappa-B. This is Interleukin-1 receptor-like 2 (Il1rl2) from Rattus norvegicus (Rat).